The following is a 388-amino-acid chain: Deoxyguanosinetriphosphate triphosphohydrolase-like protein (388 aa).

A disordered region spans residues 1–32 (MSVGMAAPRAPYSCDPDRSRGRLFAEPPSRTR). Residues 69 to 205 (RLTHSLEVAQ…AALADDIAYD (137 aa)) form the HD domain.

Belongs to the dGTPase family. Type 2 subfamily.

The polypeptide is Deoxyguanosinetriphosphate triphosphohydrolase-like protein (Bradyrhizobium sp. (strain ORS 278)).